The sequence spans 465 residues: Catalase cnsD (465 aa).

His39 is a catalytic residue. Tyr331 contributes to the heme binding site.

It belongs to the catalase family. The cofactor is heme.

It functions in the pathway alkaloid biosynthesis. Its function is as follows. Catalase; part of the gene cluster that mediates the biosynthesis of communesins, a prominent class of indole alkaloids with great potential as pharmaceuticals. Communesins are biosynthesized by the coupling of tryptamine and aurantioclavine, two building blocks derived from L-tryptophan. The L-tryptophan decarboxylase cnsB converts L-tryptophan to tryptamine, whereas the tryptophan dimethylallyltransferase cnsF converts L-tryptophan to 4-dimethylallyl tryptophan which is further transformed to aurantioclavine by the aurantioclavine synthase cnsA, probably aided by the catalase cnsD. The cytochrome P450 monooxygenase cnsC catalyzes the heterodimeric coupling between the two different indole moieties, tryptamine and aurantioclavine, to construct vicinal quaternary stereocenters and yield the heptacyclic communesin scaffold. The O-methyltransferase cnsE then methylates the communesin scaffold to produce communesin K, the simplest characterized communesin that contains the heptacyclic core. The dioxygenase cnsJ converts communesin K into communesin I. Acylation to introduce the hexadienyl group at position N16 of communesin I by the acyltransferase cnsK leads to the production of communesin B. The hexadienyl group is produced by the highly reducing polyketide synthase cnsI, before being hydrolytically removed from cnsI by the serine hydrolase cnsH, converted into hexadienyl-CoA by the CoA ligase cnsG, and then transferred to communesin I by cnsK. Surprisingly, cnsK may also be a promiscuous acyltransferase that can tolerate a range of acyl groups, including acetyl-, propionyl-, and butyryl-CoA, which lead to communesins A, G and H respectively. The roles of the alpha-ketoglutarate-dependent dioxygenases cnsM and cnsP have still to be determined. This is Catalase cnsD from Penicillium expansum (Blue mold rot fungus).